Here is a 131-residue protein sequence, read N- to C-terminus: MPTINQLITNGRKGIIKKTKSPALKNCPQRRGVCTRVYTVTPRKPNSALRKVARVRLTSGYEISSYIPGEGHNLQEHSLVLIRGGRIRDLPGVRYHIIRGTLDTAGVDGRKQGRSKYGAKKAKVAKTASAK.

Position 89 is a 3-methylthioaspartic acid (Asp89). The interval 106–131 (GVDGRKQGRSKYGAKKAKVAKTASAK) is disordered. A compositionally biased stretch (basic residues) spans 112-124 (QGRSKYGAKKAKV).

It belongs to the universal ribosomal protein uS12 family. As to quaternary structure, part of the 30S ribosomal subunit. Contacts proteins S8 and S17. May interact with IF1 in the 30S initiation complex.

In terms of biological role, with S4 and S5 plays an important role in translational accuracy. Functionally, interacts with and stabilizes bases of the 16S rRNA that are involved in tRNA selection in the A site and with the mRNA backbone. Located at the interface of the 30S and 50S subunits, it traverses the body of the 30S subunit contacting proteins on the other side and probably holding the rRNA structure together. The combined cluster of proteins S8, S12 and S17 appears to hold together the shoulder and platform of the 30S subunit. The chain is Small ribosomal subunit protein uS12 from Endomicrobium trichonymphae.